A 698-amino-acid polypeptide reads, in one-letter code: Na(+)/H(+) antiporter NhaS5 (698 aa).

Transmembrane regions (helical) follow at residues 10–30 (SNPL…PPIF), 35–55 (LPGL…GLGV), 65–85 (LFTD…IDMV), 100–120 (LTFA…GYSF), 121–141 (NASV…YPIV), 156–176 (IGAT…CISI), 184–204 (AGLV…LIGF), 222–242 (QFLF…LINV), 275–295 (LFIP…AFLV), 300–320 (LFPL…VAAI), 333–353 (GLTM…AAVA), and 370–390 (VLNT…LMTA).

The protein belongs to the monovalent cation:proton antiporter 2 (CPA2) transporter (TC 2.A.37) family.

The protein resides in the membrane. Functionally, na(+)/H(+) antiporter. This chain is Na(+)/H(+) antiporter NhaS5 (nhaS5), found in Synechocystis sp. (strain ATCC 27184 / PCC 6803 / Kazusa).